Consider the following 365-residue polypeptide: Isopentenyl-diphosphate delta-isomerase (365 aa).

Residue 4 to 5 (RK) participates in substrate binding. FMN is bound by residues 62–64 (GMT), Ser92, and Asn121. 92 to 94 (SQR) is a binding site for substrate. Gln155 serves as a coordination point for substrate. Glu156 is a Mg(2+) binding site. Residues Lys187, Thr216, 267–269 (GVR), and 288–289 (AL) contribute to the FMN site.

The protein belongs to the IPP isomerase type 2 family. As to quaternary structure, homooctamer. Dimer of tetramers. FMN is required as a cofactor. Requires NADPH as cofactor. Mg(2+) serves as cofactor.

Its subcellular location is the cytoplasm. It carries out the reaction isopentenyl diphosphate = dimethylallyl diphosphate. In terms of biological role, involved in the biosynthesis of isoprenoids. Catalyzes the 1,3-allylic rearrangement of the homoallylic substrate isopentenyl (IPP) to its allylic isomer, dimethylallyl diphosphate (DMAPP). The chain is Isopentenyl-diphosphate delta-isomerase from Methanopyrus kandleri (strain AV19 / DSM 6324 / JCM 9639 / NBRC 100938).